We begin with the raw amino-acid sequence, 169 residues long: Probable actin-related protein 2/3 complex subunit 4 (169 aa).

The protein belongs to the ARPC4 family. In terms of assembly, component of the Arp2/3 complex, at least composed of arx-1, arx-2, arx-4 and arx-6.

It localises to the cytoplasm. The protein resides in the cytoskeleton. Functionally, functions as actin-binding component of the Arp2/3 complex which is involved in regulation of actin polymerization and together with an activating nucleation-promoting factor (NPF) mediates the formation of branched actin networks. Seems to contact the mother actin filament. Plays a role in time-dependent memory loss and the retention of conditioned behavior over time. In Caenorhabditis elegans, this protein is Probable actin-related protein 2/3 complex subunit 4.